The following is a 94-amino-acid chain: Co-chaperonin GroES (94 aa).

The protein belongs to the GroES chaperonin family. In terms of assembly, heptamer of 7 subunits arranged in a ring. Interacts with the chaperonin GroEL.

The protein localises to the cytoplasm. In terms of biological role, together with the chaperonin GroEL, plays an essential role in assisting protein folding. The GroEL-GroES system forms a nano-cage that allows encapsulation of the non-native substrate proteins and provides a physical environment optimized to promote and accelerate protein folding. GroES binds to the apical surface of the GroEL ring, thereby capping the opening of the GroEL channel. This is Co-chaperonin GroES from Streptococcus pneumoniae (strain CGSP14).